The following is a 185-amino-acid chain: A-type ATP synthase subunit E (185 aa).

Belongs to the V-ATPase E subunit family. Has multiple subunits with at least A(3), B(3), C, D, E, F, H, I and proteolipid K(x).

It localises to the cell membrane. Functionally, component of the A-type ATP synthase that produces ATP from ADP in the presence of a proton gradient across the membrane. The sequence is that of A-type ATP synthase subunit E from Thermoplasma volcanium (strain ATCC 51530 / DSM 4299 / JCM 9571 / NBRC 15438 / GSS1).